The sequence spans 1011 residues: Poly [ADP-ribose] polymerase 1 (1011 aa).

PARP-type zinc fingers lie at residues 9-91 and 113-203; these read YRAE…ETGA and FAAE…PATK. Zn(2+)-binding residues include cysteine 21, cysteine 24, histidine 53, cysteine 56, cysteine 125, cysteine 128, histidine 159, and cysteine 162. The tract at residues 198–235 is disordered; sequence QLPATKTEGKRKGEEVDGNVVAKKKSRKEKEKESKQEK. 2 consecutive short sequence motifs (nuclear localization signal) follow at residues 207–209 and 220–225; these read KRK and KKKSRK. The PADR1 zinc-binding domain maps to 224–358; that stretch reads RKEKEKESKQ…CKKQDRIFPP (135 aa). Positions 225–235 are enriched in basic and acidic residues; it reads KEKEKESKQEK. A zinc ribbon region spans residues 289-331; sequence GALLPCEECKGQFVFKSDAYYCSGDITAWTKCVAKTQTPNRKD. Positions 294, 297, 310, and 320 each coordinate Zn(2+). The interval 359–378 is disordered; the sequence is EAATVNSAPPPPASAPLTET. Positions 371-522 are automodification domain; that stretch reads ASAPLTETVT…PSKSEKKMKL (152 aa). A BRCT domain is found at 382–473; it reads PQDKPLTNMK…KGFQELLSLH (92 aa). PolyADP-ribosyl glutamic acid occurs at positions 403, 404, 410, 411, 432, 434, 441, 442, 453, 454, 468, 481, 485, 488, 509, 510, and 517. Positions 496 to 519 are disordered; the sequence is SKPANMKSAGKVKEEQGPSKSEKK. Residues 506 to 519 show a composition bias toward basic and acidic residues; sequence KVKEEQGPSKSEKK. In terms of domain architecture, WGR spans 539-635; sequence SAHVFEKGGK…KNFTKYPKKF (97 aa). The region spanning 659–776 is the PARP alpha-helical domain; that stretch reads KSKLAKPIQD…DIEVAYSLLR (118 aa). In terms of domain architecture, PARP catalytic spans 785 to 1011; that stretch reads DPIDINYEKL…LKFNYKTSLW (227 aa). NAD(+) contacts are provided by residues 859 to 861, glycine 868, arginine 875, and serine 901; that span reads HGS. Glutamate 985 serves as the catalytic For poly [ADP-ribose] polymerase activity.

Belongs to the ARTD/PARP family. Homodimer; PARP-type zinc-fingers from separate parp1 molecules form a dimer module that specifically recognizes DNA strand breaks. Post-translationally, poly-ADP-ribosylated on serine, glutamate and aspartate residues by autocatalysis. Auto-ADP-ribosylation on serine takes place following interaction with HPF1. Auto poly-ADP-ribosylation on serine residues promotes its dissociation from chromatin.

It localises to the chromosome. It is found in the nucleus. The protein localises to the nucleolus. Its subcellular location is the cytoplasm. The protein resides in the cytosol. The enzyme catalyses NAD(+) + (ADP-D-ribosyl)n-acceptor = nicotinamide + (ADP-D-ribosyl)n+1-acceptor + H(+).. It catalyses the reaction L-seryl-[protein] + NAD(+) = O-(ADP-D-ribosyl)-L-seryl-[protein] + nicotinamide + H(+). It carries out the reaction L-aspartyl-[protein] + NAD(+) = 4-O-(ADP-D-ribosyl)-L-aspartyl-[protein] + nicotinamide. The catalysed reaction is L-glutamyl-[protein] + NAD(+) = 5-O-(ADP-D-ribosyl)-L-glutamyl-[protein] + nicotinamide. The enzyme catalyses L-tyrosyl-[protein] + NAD(+) = O-(ADP-D-ribosyl)-L-tyrosyl-[protein] + nicotinamide + H(+). It catalyses the reaction L-histidyl-[protein] + NAD(+) = N(tele)-(ADP-D-ribosyl)-L-histidyl-[protein] + nicotinamide + H(+). ADP-ribosyltransferase activity is regulated via an allosteric activation mechanism. In absence of activation signal, parp1 is autoinhibited by the PARP alpha-helical domain (also named HD region), which prevents effective NAD(+)-binding. Activity is highly stimulated by signals, such as DNA strand breaks. Binding to damaged DNA unfolds the PARP alpha-helical domain, relieving autoinhibition. Poly-ADP-ribosyltransferase activity is tightly regulated and parp1 is removed from damaged chromatin following initial poly-ADP-ribosylation of chromatin to avoid prolonged residence (trapping) that has cytotoxic consequences. A number of factors or post-translational modifications (auto-poly-ADP-ribosylation) promote parp1 removal from chromatin. Poly-ADP-ribosyltransferase that mediates poly-ADP-ribosylation of proteins and plays a key role in DNA repair. Mediates glutamate, aspartate, serine, histidine or tyrosine ADP-ribosylation of proteins: the ADP-D-ribosyl group of NAD(+) is transferred to the acceptor carboxyl group of target residues and further ADP-ribosyl groups are transferred to the 2'-position of the terminal adenosine moiety, building up a polymer with an average chain length of 20-30 units. Serine ADP-ribosylation of proteins constitutes the primary form of ADP-ribosylation of proteins in response to DNA damage. Specificity for the different amino acids is conferred by interacting factors, such as hpf1 and nmnat1. Following interaction with hpf1, catalyzes serine ADP-ribosylation of target proteins; hpf1 confers serine specificity by completing the parp1 active site. Also catalyzes tyrosine ADP-ribosylation of target proteins following interaction with hpf1. Following interaction with nmnat1, catalyzes glutamate and aspartate ADP-ribosylation of target proteins; nmnat1 confers glutamate and aspartate specificity. Parp1 initiates the repair of DNA breaks: recognizes and binds DNA breaks within chromatin and recruits hpf1, licensing serine ADP-ribosylation of target proteins, such as histones (H2BS6ADPr and H3S10ADPr), thereby promoting decompaction of chromatin and the recruitment of repair factors leading to the reparation of DNA strand breaks. In addition to base excision repair (BER) pathway, also involved in double-strand breaks (DSBs) repair. Mediates the poly-ADP-ribosylation of a number of proteins. In addition to proteins, also able to ADP-ribosylate DNA: catalyzes ADP-ribosylation of DNA strand break termini containing terminal phosphates and a 2'-OH group in single- and double-stranded DNA, respectively. Parp1-mediated DNA repair in neurons plays a role in sleep: senses DNA damage in neurons and promotes sleep, facilitating efficient DNA repair. In addition to DNA repair, also involved in other processes, such as transcription regulation, programmed cell death, membrane repair, adipogenesis and innate immunity. Acts as a repressor of transcription: binds to nucleosomes and modulates chromatin structure in a manner similar to histone H1, thereby altering RNA polymerase II. Acts both as a positive and negative regulator of transcription elongation, depending on the context. Poly-ADP-ribose chains generated by parp1 also play a role in poly-ADP-ribose-dependent cell death, a process named parthanatos. Also acts as a negative regulator of the cGAS-STING pathway by mediating poly-ADP-ribosylation and inactivation of cgas. Acts as a negative regulator of adipogenesis by catalyzing poly ADP-ribosylation of histone H2B on 'Glu-35' (H2BE35ADPr). This Gallus gallus (Chicken) protein is Poly [ADP-ribose] polymerase 1 (PARP1).